We begin with the raw amino-acid sequence, 237 residues long: 2,3-bisphosphoglycerate-dependent phosphoglycerate mutase (237 aa).

Residues 8-15 (RHGQSQWN), 21-22 (TG), Arg-60, 87-90 (ERHY), Lys-98, 114-115 (RR), and 180-181 (GN) contribute to the substrate site. His-9 functions as the Tele-phosphohistidine intermediate in the catalytic mechanism. The Proton donor/acceptor role is filled by Glu-87.

Belongs to the phosphoglycerate mutase family. BPG-dependent PGAM subfamily. As to quaternary structure, homodimer.

It catalyses the reaction (2R)-2-phosphoglycerate = (2R)-3-phosphoglycerate. It functions in the pathway carbohydrate degradation; glycolysis; pyruvate from D-glyceraldehyde 3-phosphate: step 3/5. Functionally, catalyzes the interconversion of 2-phosphoglycerate and 3-phosphoglycerate. This is 2,3-bisphosphoglycerate-dependent phosphoglycerate mutase from Caulobacter vibrioides (strain ATCC 19089 / CIP 103742 / CB 15) (Caulobacter crescentus).